The sequence spans 184 residues: Lipid A acyltransferase PagP (184 aa).

An N-terminal signal peptide occupies residues 1-22 (MNIRHGIIAMSSTMLVPLAAEA). Catalysis depends on residues His57, Asp100, and Ser101.

It belongs to the lipid A palmitoyltransferase family. As to quaternary structure, homodimer.

It localises to the cell outer membrane. It catalyses the reaction a lipid A + a 1,2-diacyl-sn-glycero-3-phosphocholine = a hepta-acyl lipid A + a 2-acyl-sn-glycero-3-phosphocholine. The enzyme catalyses a lipid IVA + a 1,2-diacyl-sn-glycero-3-phosphocholine = a lipid IVB + a 2-acyl-sn-glycero-3-phosphocholine. It carries out the reaction a lipid IIA + a 1,2-diacyl-sn-glycero-3-phosphocholine = a lipid IIB + a 2-acyl-sn-glycero-3-phosphocholine. Functionally, transfers a fatty acid residue from the sn-1 position of a phospholipid to the N-linked hydroxyfatty acid chain on the proximal unit of lipid A or its precursors. The protein is Lipid A acyltransferase PagP of Methylobacillus flagellatus (strain ATCC 51484 / DSM 6875 / VKM B-1610 / KT).